The primary structure comprises 304 residues: Peroxisomal membrane protein 13 (304 aa).

Disordered regions lie at residues 1–78 and 258–304; these read MASQ…WEQQ and PRKM…VWGN. 2 stretches are compositionally biased toward polar residues: residues 19–44 and 56–67; these read NTSGPNPFRPPSNTSTAGSVEASGTA and RPNTAANMNSLS. A compositionally biased stretch (low complexity) spans 262–279; that stretch reads QQPPQGPNGLPLPHQPHG.

The protein belongs to the peroxin-13 family. Interacts with PEX14; forming the PEX13-PEX14 docking complex. Interacts (via N-terminus) with PEX7, but not with PEX5. Interacts with APEM9 (via N-terminus). Highly expressed in pollen. Detected in shoots, roots, stems, leaves, inflorescences and emasculated postils. Strongly expressed in both male and female gametophytes during fertilization.

The protein resides in the peroxisome membrane. In terms of biological role, component of the PEX13-PEX14 docking complex, a translocon channel that specifically mediates the import of peroxisomal cargo proteins bound to PEX5 receptor. The PEX13-PEX14 docking complex forms a large import pore which can be opened to a diameter of about 9 nm. Mechanistically, PEX5 receptor along with cargo proteins associates with the PEX14 subunit of the PEX13-PEX14 docking complex in the cytosol, leading to the insertion of the receptor into the organelle membrane with the concomitant translocation of the cargo into the peroxisome matrix. Essential for pollen-tube discharge that take place only in the presence of functional peroxisomes in either the male or the female gametophyte. The protein is Peroxisomal membrane protein 13 of Arabidopsis thaliana (Mouse-ear cress).